A 176-amino-acid polypeptide reads, in one-letter code: MKFHGTTILVVRRNGQTVMGGDGQVTFGSTVLKGNARKVRKLGEGKVLAGFAGSVADAMTLFDRFEAKLREWGGNLTKAAVELAKDWRTDRVLRRLEALLLVADKENIFIISGNGEVIQPDDDAAAIGSGGPYALAAAKALLRNTDLSAREIVEKAMMIAGEICIYTNQNIVIEEV.

Residue T6 is part of the active site. Positions 161, 164, and 167 each coordinate Na(+).

The protein belongs to the peptidase T1B family. HslV subfamily. A double ring-shaped homohexamer of HslV is capped on each side by a ring-shaped HslU homohexamer. The assembly of the HslU/HslV complex is dependent on binding of ATP.

The protein resides in the cytoplasm. The catalysed reaction is ATP-dependent cleavage of peptide bonds with broad specificity.. Allosterically activated by HslU binding. Protease subunit of a proteasome-like degradation complex believed to be a general protein degrading machinery. The polypeptide is ATP-dependent protease subunit HslV (Thermotoga sp. (strain RQ2)).